We begin with the raw amino-acid sequence, 223 residues long: Zinc-finger homeodomain protein 12 (223 aa).

Positions 1-20 (MSSLSKPNRQFLSPTTNNQD) are enriched in polar residues. Residues 1–24 (MSSLSKPNRQFLSPTTNNQDTGRE) are disordered. The ZF-HD dimerization-type; degenerate zinc finger occupies 37–88 (YNECLKNHAVSLGGHALDGCGEFTPKSTTILTDPPSLRCDACGCHRNFHRRS). Residues 147–204 (KKHKRTKFTAEQKVKMRGFAERAGWKINGWDEKWVREFCSEVGIERKVLKVWIHNNKY) constitute a DNA-binding region (homeobox; atypical).

Homo- and heterodimer with other ZFHD proteins. Interacts with ZHD11.

It is found in the nucleus. In terms of biological role, putative transcription factor. The protein is Zinc-finger homeodomain protein 12 (ZHD12) of Arabidopsis thaliana (Mouse-ear cress).